Here is a 232-residue protein sequence, read N- to C-terminus: tRNA (guanine-N(1)-)-methyltransferase (232 aa).

S-adenosyl-L-methionine contacts are provided by residues glycine 111 and isoleucine 131–leucine 136.

Belongs to the RNA methyltransferase TrmD family. Homodimer.

The protein resides in the cytoplasm. The catalysed reaction is guanosine(37) in tRNA + S-adenosyl-L-methionine = N(1)-methylguanosine(37) in tRNA + S-adenosyl-L-homocysteine + H(+). Functionally, specifically methylates guanosine-37 in various tRNAs. The polypeptide is tRNA (guanine-N(1)-)-methyltransferase (Bartonella quintana (strain Toulouse) (Rochalimaea quintana)).